Reading from the N-terminus, the 345-residue chain is Uroporphyrinogen decarboxylase (345 aa).

Substrate contacts are provided by residues 27-31 (RQAGR), Phe-46, Asp-76, Tyr-152, Ser-207, and His-320.

This sequence belongs to the uroporphyrinogen decarboxylase family. Homodimer.

The protein resides in the cytoplasm. It carries out the reaction uroporphyrinogen III + 4 H(+) = coproporphyrinogen III + 4 CO2. It participates in porphyrin-containing compound metabolism; protoporphyrin-IX biosynthesis; coproporphyrinogen-III from 5-aminolevulinate: step 4/4. Functionally, catalyzes the decarboxylation of four acetate groups of uroporphyrinogen-III to yield coproporphyrinogen-III. This chain is Uroporphyrinogen decarboxylase, found in Geobacillus kaustophilus (strain HTA426).